The sequence spans 148 residues: Cytochrome c-type biogenesis protein CcmE (148 aa).

Topologically, residues 1-7 are cytoplasmic; that stretch reads MKPRHKK. Residues 8-28 form a helical; Signal-anchor for type II membrane protein membrane-spanning segment; it reads LAIIASSVTALGVASVLVLNA. At 29–148 the chain is on the periplasmic side; it reads FQSNLVFFFS…ADKARKTVMQ (120 aa). His123 and Tyr127 together coordinate heme.

This sequence belongs to the CcmE/CycJ family.

It localises to the cell inner membrane. Its function is as follows. Heme chaperone required for the biogenesis of c-type cytochromes. Transiently binds heme delivered by CcmC and transfers the heme to apo-cytochromes in a process facilitated by CcmF and CcmH. This Nitrosospira multiformis (strain ATCC 25196 / NCIMB 11849 / C 71) protein is Cytochrome c-type biogenesis protein CcmE.